Consider the following 959-residue polypeptide: Isoleucine--tRNA ligase (959 aa).

A 'HIGH' region motif is present at residues Pro-66–His-76. Glu-592 is an L-isoleucyl-5'-AMP binding site. Positions Lys-633–Ser-637 match the 'KMSKS' region motif. Lys-636 provides a ligand contact to ATP. Zn(2+)-binding residues include Cys-922, Cys-925, Cys-942, and Cys-945.

This sequence belongs to the class-I aminoacyl-tRNA synthetase family. IleS type 1 subfamily. As to quaternary structure, monomer. It depends on Zn(2+) as a cofactor.

It localises to the cytoplasm. The enzyme catalyses tRNA(Ile) + L-isoleucine + ATP = L-isoleucyl-tRNA(Ile) + AMP + diphosphate. Its function is as follows. Catalyzes the attachment of isoleucine to tRNA(Ile). As IleRS can inadvertently accommodate and process structurally similar amino acids such as valine, to avoid such errors it has two additional distinct tRNA(Ile)-dependent editing activities. One activity is designated as 'pretransfer' editing and involves the hydrolysis of activated Val-AMP. The other activity is designated 'posttransfer' editing and involves deacylation of mischarged Val-tRNA(Ile). This chain is Isoleucine--tRNA ligase, found in Ralstonia pickettii (strain 12J).